A 135-amino-acid chain; its full sequence is Integration host factor subunit beta (135 aa).

The span at 83–92 (GKELRERVDR) shows a compositional bias: basic and acidic residues. Residues 83 to 135 (GKELRERVDRTVTQGGGMNGNGHAPHGKTGQSQLGSQSPASLHDDGQLNLVRS) are disordered. Polar residues predominate over residues 111 to 122 (TGQSQLGSQSPA).

It belongs to the bacterial histone-like protein family. In terms of assembly, heterodimer of an alpha and a beta chain.

Functionally, this protein is one of the two subunits of integration host factor, a specific DNA-binding protein that functions in genetic recombination as well as in transcriptional and translational control. The sequence is that of Integration host factor subunit beta from Cupriavidus metallidurans (strain ATCC 43123 / DSM 2839 / NBRC 102507 / CH34) (Ralstonia metallidurans).